We begin with the raw amino-acid sequence, 464 residues long: Glycine--tRNA ligase (464 aa).

Substrate-binding residues include Arg104 and Glu175. Residues 207 to 209 (RNE), 217 to 222 (FRTREF), 292 to 293 (EL), and 336 to 339 (GVNR) each bind ATP. 222 to 226 (FEQME) contacts substrate. 332 to 336 (EPALG) serves as a coordination point for substrate.

This sequence belongs to the class-II aminoacyl-tRNA synthetase family. In terms of assembly, homodimer.

It localises to the cytoplasm. It catalyses the reaction tRNA(Gly) + glycine + ATP = glycyl-tRNA(Gly) + AMP + diphosphate. Functionally, catalyzes the attachment of glycine to tRNA(Gly). This is Glycine--tRNA ligase from Leptospira interrogans serogroup Icterohaemorrhagiae serovar copenhageni (strain Fiocruz L1-130).